The sequence spans 162 residues: EF-hand calcium-binding domain-containing protein 11 (162 aa).

EF-hand domains follow at residues 18 to 53 (SERR…LFGY), 91 to 126 (LYRN…VAPK), and 127 to 162 (LPSR…GKAK). Residues D140, D142, D144, H146, and D151 each coordinate Ca(2+).

The protein is EF-hand calcium-binding domain-containing protein 11 (Efcab11) of Rattus norvegicus (Rat).